A 452-amino-acid chain; its full sequence is tRNA modification GTPase MnmE (452 aa).

(6S)-5-formyl-5,6,7,8-tetrahydrofolate contacts are provided by Arg-23, Glu-81, and Lys-120. The region spanning Gly-217–Leu-373 is the TrmE-type G domain. Asn-227 is a K(+) binding site. GTP is bound by residues Asn-227 to Ser-232, Thr-246 to Thr-252, and Asp-271 to Gly-274. Ser-231 is a Mg(2+) binding site. K(+)-binding residues include Thr-246, Ile-248, and Thr-251. Mg(2+) is bound at residue Thr-252. Residue Lys-452 participates in (6S)-5-formyl-5,6,7,8-tetrahydrofolate binding.

It belongs to the TRAFAC class TrmE-Era-EngA-EngB-Septin-like GTPase superfamily. TrmE GTPase family. As to quaternary structure, homodimer. Heterotetramer of two MnmE and two MnmG subunits. K(+) serves as cofactor.

It is found in the cytoplasm. Exhibits a very high intrinsic GTPase hydrolysis rate. Involved in the addition of a carboxymethylaminomethyl (cmnm) group at the wobble position (U34) of certain tRNAs, forming tRNA-cmnm(5)s(2)U34. This Mycoplasma mycoides subsp. mycoides SC (strain CCUG 32753 / NCTC 10114 / PG1) protein is tRNA modification GTPase MnmE.